Reading from the N-terminus, the 507-residue chain is Maturase K (507 aa).

This sequence belongs to the intron maturase 2 family. MatK subfamily.

The protein localises to the plastid. It localises to the chloroplast. Usually encoded in the trnK tRNA gene intron. Probably assists in splicing its own and other chloroplast group II introns. The sequence is that of Maturase K from Lens culinaris (Lentil).